Reading from the N-terminus, the 611-residue chain is Aspartate--tRNA(Asp/Asn) ligase (611 aa).

Glutamate 177 is a binding site for L-aspartate. The aspartate stretch occupies residues 201–204 (QLFK). Residue arginine 223 coordinates L-aspartate. ATP-binding positions include 223–225 (RDE) and glutamine 232. L-aspartate is bound at residue histidine 461. Glutamate 499 is an ATP binding site. Arginine 506 contacts L-aspartate. 551–554 (GVDR) lines the ATP pocket.

It belongs to the class-II aminoacyl-tRNA synthetase family. Type 1 subfamily. In terms of assembly, homodimer.

Its subcellular location is the cytoplasm. It catalyses the reaction tRNA(Asx) + L-aspartate + ATP = L-aspartyl-tRNA(Asx) + AMP + diphosphate. Functionally, aspartyl-tRNA synthetase with relaxed tRNA specificity since it is able to aspartylate not only its cognate tRNA(Asp) but also tRNA(Asn). Reaction proceeds in two steps: L-aspartate is first activated by ATP to form Asp-AMP and then transferred to the acceptor end of tRNA(Asp/Asn). This is Aspartate--tRNA(Asp/Asn) ligase from Synechococcus sp. (strain WH7803).